Consider the following 179-residue polypeptide: MANVANKYAKALFDVAIDKDRLDLMYDELSEVSEATKNYGEDLRAIDSNPNQPASERRKFVGIVFGDANYYLKNMLMILANNRHLVLINSIFKEFKSLYNEYHNEDSAIVESVYQLSDEELDRIKDLILKQTNLSQVHITTKINPELIGGFRVKVGTTVLDGSVKKDLEQIERKFRRVN.

The protein belongs to the ATPase delta chain family. As to quaternary structure, F-type ATPases have 2 components, F(1) - the catalytic core - and F(0) - the membrane proton channel. F(1) has five subunits: alpha(3), beta(3), gamma(1), delta(1), epsilon(1). F(0) has three main subunits: a(1), b(2) and c(10-14). The alpha and beta chains form an alternating ring which encloses part of the gamma chain. F(1) is attached to F(0) by a central stalk formed by the gamma and epsilon chains, while a peripheral stalk is formed by the delta and b chains.

The protein localises to the cell membrane. Its function is as follows. F(1)F(0) ATP synthase produces ATP from ADP in the presence of a proton or sodium gradient. F-type ATPases consist of two structural domains, F(1) containing the extramembraneous catalytic core and F(0) containing the membrane proton channel, linked together by a central stalk and a peripheral stalk. During catalysis, ATP synthesis in the catalytic domain of F(1) is coupled via a rotary mechanism of the central stalk subunits to proton translocation. In terms of biological role, this protein is part of the stalk that links CF(0) to CF(1). It either transmits conformational changes from CF(0) to CF(1) or is implicated in proton conduction. The polypeptide is ATP synthase subunit delta (Staphylococcus haemolyticus (strain JCSC1435)).